The following is a 117-amino-acid chain: Basic phospholipase A2 pseudexin A chain (117 aa).

7 disulfide bridges follow: Cys11/Cys71, Cys27/Cys117, Cys29/Cys45, Cys44/Cys98, Cys51/Cys91, Cys60/Cys84, and Cys78/Cys89. Residues Tyr28, Gly30, and Gly32 each coordinate Ca(2+). His48 is a catalytic residue. Asp49 is a binding site for Ca(2+). Asp92 is an active-site residue.

It belongs to the phospholipase A2 family. Group I subfamily. D49 sub-subfamily. Ca(2+) serves as cofactor. As to expression, expressed by the venom gland.

Its subcellular location is the secreted. The catalysed reaction is a 1,2-diacyl-sn-glycero-3-phosphocholine + H2O = a 1-acyl-sn-glycero-3-phosphocholine + a fatty acid + H(+). In terms of biological role, PLA2 catalyzes the calcium-dependent hydrolysis of the 2-acyl groups in 3-sn-phosphoglycerides. The chain is Basic phospholipase A2 pseudexin A chain from Pseudechis porphyriacus (Red-bellied black snake).